The chain runs to 236 residues: uncharacterized protein (236 aa).

The disordered stretch occupies residues 217–236 (GESPDNVVRGEGGFGSTGGH). Gly residues predominate over residues 226–236 (GEGGFGSTGGH).

This is an uncharacterized protein from Ostreid herpesvirus 1 (isolate France) (OsHV-1).